A 149-amino-acid polypeptide reads, in one-letter code: L-alanine exporter AlaE (149 aa).

4 consecutive transmembrane segments (helical) span residues 16-36, 46-66, 85-105, and 112-132; these read FAMVVYCSVVNMLIEIFLSGM, LVAIPVNILIAWPYGVYRDLI, VLAYVTFQSPVYIIILLTVGA, and AAVSSNIVVSMLMGAVYGYFL.

Belongs to the AlaE exporter family.

The protein localises to the cell inner membrane. Its function is as follows. Exports L-alanine. The chain is L-alanine exporter AlaE from Salmonella arizonae (strain ATCC BAA-731 / CDC346-86 / RSK2980).